The primary structure comprises 462 residues: Probable alcohol acetyltransferase crmB (462 aa).

This sequence belongs to the alcohol acetyltransferase FCK4 family.

It participates in secondary metabolite biosynthesis. Functionally, probable alcohol acetyltransferase; part of the crm gene cluster that mediates the biosynthesis of a yet unidentified copper-responsive metabolite. In contrast to crmA, is not involved in the biosynthesis of fumivalines or fumicicolins. The chain is Probable alcohol acetyltransferase crmB from Aspergillus fumigatus (strain ATCC MYA-4609 / CBS 101355 / FGSC A1100 / Af293) (Neosartorya fumigata).